Reading from the N-terminus, the 492-residue chain is Glutamyl-tRNA(Gln) amidotransferase subunit B, mitochondrial (492 aa).

This sequence belongs to the GatB/GatE family. GatB subfamily. Subunit of the heterotrimeric GatFAB amidotransferase (AdT) complex, composed of A, B and F subunits.

The protein localises to the mitochondrion. It carries out the reaction L-glutamyl-tRNA(Gln) + L-glutamine + ATP + H2O = L-glutaminyl-tRNA(Gln) + L-glutamate + ADP + phosphate + H(+). Its function is as follows. Allows the formation of correctly charged Gln-tRNA(Gln) through the transamidation of misacylated Glu-tRNA(Gln) in the mitochondria. The reaction takes place in the presence of glutamine and ATP through an activated gamma-phospho-Glu-tRNA(Gln). The chain is Glutamyl-tRNA(Gln) amidotransferase subunit B, mitochondrial from Komagataella phaffii (strain GS115 / ATCC 20864) (Yeast).